Reading from the N-terminus, the 153-residue chain is uncharacterized protein (153 aa).

2 helical membrane passes run 1 to 21 (MAAT…LFFS) and 106 to 126 (IVPI…TVYI).

It is found in the membrane. This is an uncharacterized protein from Saccharomyces cerevisiae (strain ATCC 204508 / S288c) (Baker's yeast).